The primary structure comprises 315 residues: GTP cyclohydrolase MptA (315 aa).

It belongs to the GTP cyclohydrolase IV family. As to quaternary structure, homodimer. The cofactor is Fe(2+).

The enzyme catalyses GTP + H2O = 7,8-dihydroneopterin 2',3'-cyclic phosphate + formate + diphosphate + H(+). The protein operates within cofactor biosynthesis; 5,6,7,8-tetrahydromethanopterin biosynthesis. In terms of biological role, converts GTP to 7,8-dihydro-D-neopterin 2',3'-cyclic phosphate, the first intermediate in the biosynthesis of coenzyme methanopterin. This chain is GTP cyclohydrolase MptA, found in Methanococcus maripaludis (strain C5 / ATCC BAA-1333).